The primary structure comprises 77 residues: Large ribosomal subunit protein eL20 (77 aa).

This sequence belongs to the eukaryotic ribosomal protein eL20 family. As to quaternary structure, part of the 50S ribosomal subunit. Binds 23S rRNA.

The chain is Large ribosomal subunit protein eL20 from Thermococcus onnurineus (strain NA1).